The following is a 409-amino-acid chain: MRVFVARQPIFNRKEQVVAYELLYRESEENVYSAKDGDQATTDLVINSFLNIGIEKLTEGKRCFVNFTESLMFSNLPTSFNPKQLVIEILEDIPITPALISRCKELKKMGYMLALDDFYAINPQDEDLLEKLMSYIDILKIDFLKTTRMERRTILQTYGCRGLIFLAEKVETRKEYKQAVQDGFQLFQGYFFSEPRIISGHDLSTHFYSYYELLNELSKEQPNIKRVTEYIERDLSLSYQILKFLNSSHSRLSQKIESIQQAIMLLGFNEIKRWIYILSFKDLSRKGHSSKHEIIKISLIRAKLCELLARKTSRPQPASYMLIGMFSLIDTLLHREIEEIVQELPLKDEVGQALLGHQNDYYQMLELVKLIESNNWDTCSELGNQLDKEEAYECYLEALEWCHNLMDAK.

Positions 1-209 (MRVFVARQPI…GHDLSTHFYS (209 aa)) constitute an EAL domain. One can recognise an HDOD domain in the interval 203-392 (LSTHFYSYYE…GNQLDKEEAY (190 aa)).

This is an uncharacterized protein from Bacillus subtilis (strain 168).